A 656-amino-acid chain; its full sequence is Chromosomal replication initiator protein DnaA (656 aa).

Positions 1 to 100 (MADVPADLAA…TAGEPAGPAP (100 aa)) are domain I, interacts with DnaA modulators. The disordered stretch occupies residues 91–313 (TAGEPAGPAP…PAPATGPGEP (223 aa)). A compositionally biased stretch (pro residues) spans 97–109 (GPAPQAPQSPPSR). Residues 101–315 (QAPQSPPSRP…PATGPGEPTA (215 aa)) form a domain II region. Basic and acidic residues-rich tracts occupy residues 126 to 144 (GREE…RNRA) and 231 to 273 (QRGD…RDLP). Positions 291–313 (GPATGAPGPLAAQPAPATGPGEP) are enriched in low complexity. The tract at residues 316–532 (RLNPKYLFDT…GALIRVTAFA (217 aa)) is domain III, AAA+ region. Positions 360, 362, 363, and 364 each coordinate ATP. The segment at 533-656 (SLNRQPVDLG…TELTNRIKNG (124 aa)) is domain IV, binds dsDNA.

Belongs to the DnaA family. In terms of assembly, oligomerizes as a right-handed, spiral filament on DNA at oriC.

It localises to the cytoplasm. Its function is as follows. Plays an essential role in the initiation and regulation of chromosomal replication. ATP-DnaA binds to the origin of replication (oriC) to initiate formation of the DNA replication initiation complex once per cell cycle. Binds the DnaA box (a 9 base pair repeat at the origin) and separates the double-stranded (ds)DNA. Forms a right-handed helical filament on oriC DNA; dsDNA binds to the exterior of the filament while single-stranded (ss)DNA is stabiized in the filament's interior. The ATP-DnaA-oriC complex binds and stabilizes one strand of the AT-rich DNA unwinding element (DUE), permitting loading of DNA polymerase. After initiation quickly degrades to an ADP-DnaA complex that is not apt for DNA replication. Binds acidic phospholipids. The polypeptide is Chromosomal replication initiator protein DnaA (Streptomyces coelicolor (strain ATCC BAA-471 / A3(2) / M145)).